The chain runs to 540 residues: Collagen alpha-1(XXIII) chain (540 aa).

Over residues 1–26 the composition is skewed to gly residues; the sequence is MGPGERAGGGGDAGKGNAAGGGGGGR. The interval 1 to 28 is disordered; it reads MGPGERAGGGGDAGKGNAAGGGGGGRSA. Residues 1 to 34 lie on the Cytoplasmic side of the membrane; that stretch reads MGPGERAGGGGDAGKGNAAGGGGGGRSATTAGSR. A helical; Signal-anchor for type II membrane protein transmembrane segment spans residues 35–56; it reads AVSALCLLLSVGSAAACLLLGV. Residues 57-540 lie on the Extracellular side of the membrane; that stretch reads QAAALQGRVA…GLPVPGCWHK (484 aa). 2 disordered regions span residues 109-304 and 316-540; these read AREA…GEQG and LDAL…CWHK. Collagen-like domains lie at 124–243, 251–305, 321–380, 412–460, and 463–522; these read GRRG…PGKK, QPGP…EQGD, GPPG…MGLS, GPPG…GPPG, and GLPG…PGLD. Composition is skewed to low complexity over residues 140-156 and 168-183; these read QSGRDGYPGPLGLDGKP and PGDFGPRGDQGQDGAA. Residues 185-195 are compositionally biased toward pro residues; the sequence is PPGPPGPPGAR. Residues 322–334 are compositionally biased toward pro residues; it reads PPGPQGPPGPPGI. Basic and acidic residues predominate over residues 350-362; that stretch reads DGEKGPKGQKGDP. Residues 411 to 422 are compositionally biased toward pro residues; the sequence is PGPPGPPGPPGP. 2 stretches are compositionally biased toward basic and acidic residues: residues 435–444 and 486–503; these read DGAKGEKGAS and RGEKGDRSERGEKGERGV.

As to quaternary structure, homotrimer. Post-translationally, undergoes proteolytic cleavage by furin protease to yield a 60 kDa soluble form that forms a homotrimer and exhibits a low affinity interaction with heparin.

Its subcellular location is the cell membrane. The protein is Collagen alpha-1(XXIII) chain (COL23A1) of Homo sapiens (Human).